The primary structure comprises 197 residues: Small ribosomal subunit protein uS4c (197 aa).

The 60-residue stretch at 84–143 (MRLDNIIFQLGMASTIPAARQLVCHRHILVNHRVVDIPSYRCKPRDIISIRNRPTSANAL) folds into the S4 RNA-binding domain.

This sequence belongs to the universal ribosomal protein uS4 family. In terms of assembly, part of the 30S ribosomal subunit. Contacts protein S5. The interaction surface between S4 and S5 is involved in control of translational fidelity.

The protein resides in the plastid. Its subcellular location is the chloroplast. Its function is as follows. One of the primary rRNA binding proteins, it binds directly to 16S rRNA where it nucleates assembly of the body of the 30S subunit. With S5 and S12 plays an important role in translational accuracy. The sequence is that of Small ribosomal subunit protein uS4c (rps4) from Adiantum capillus-veneris (Maidenhair fern).